Consider the following 248-residue polypeptide: Orotidine 5'-phosphate decarboxylase (248 aa).

Substrate is bound by residues D22, K44, 71-80 (DLKFHDIPNT), T131, R192, Q201, G221, and R222. K73 serves as the catalytic Proton donor.

This sequence belongs to the OMP decarboxylase family. Type 1 subfamily. As to quaternary structure, homodimer.

The catalysed reaction is orotidine 5'-phosphate + H(+) = UMP + CO2. The protein operates within pyrimidine metabolism; UMP biosynthesis via de novo pathway; UMP from orotate: step 2/2. Catalyzes the decarboxylation of orotidine 5'-monophosphate (OMP) to uridine 5'-monophosphate (UMP). This Photorhabdus laumondii subsp. laumondii (strain DSM 15139 / CIP 105565 / TT01) (Photorhabdus luminescens subsp. laumondii) protein is Orotidine 5'-phosphate decarboxylase.